The following is a 65-amino-acid chain: MLILTRRIGETIHIGDDITVTVLGINGQQVKFGTSAPREVDVHRQEIYERIHPGSASHFSGKHPY.

It belongs to the CsrA/RsmA family. As to quaternary structure, homodimer; the beta-strands of each monomer intercalate to form a hydrophobic core, while the alpha-helices form wings that extend away from the core.

The protein resides in the cytoplasm. Its function is as follows. A translational regulator that binds mRNA to regulate translation initiation and/or mRNA stability. Usually binds in the 5'-UTR at or near the Shine-Dalgarno sequence preventing ribosome-binding, thus repressing translation. Its main target seems to be the major flagellin gene, while its function is anatagonized by FliW. This chain is Translational regulator CsrA, found in Bordetella petrii (strain ATCC BAA-461 / DSM 12804 / CCUG 43448).